A 647-amino-acid polypeptide reads, in one-letter code: MRLTLLCCTWREERMGEEGSELPVCASCSQSIYDGQYLQALNADWHADCFRCCECSTSLSHQYYEKDGQLFCKKDYWARYGESCHGCSEHITKGLVMVGGELKYHPECFICLACGNFIGDGDTYTLVEHSKLYCGQCYYQTVVTPVIEQILPDSPGSHLPHTVTLVSIPASAHGKRGLSVSIDPPHGPPGCGTEHSHTVRVQGVDPGCMSPDVKNSIHIGDRILEINGTPIRNVPLDEIDLLIQETSRLLQLTLEHDPHDSLGHGPVSDPSPLASPVHTPSGQAGSSARQKPVLRSCSIDTSPGAGSLVSPASQRKDLGRSESLRVVCRPHRIFRPSDLIHGEVLGKGCFGQAIKVTHRETGEVMVMKELIRFDEETQRTFLKEVKVMRCLEHPNVLKFIGVLYKDKRLNFITEYIKGGTLRGIIKSMDSQYPWSQRVSFAKDIASGMAYLHSMNIIHRDLNSHNCLVRENRNVVVADFGLARLMIDEKGQSEDLRSLKKPDRKKRYTVVGNPYWMAPEMINGRSYDEKVDVFSFGIVLCEIIGRVNADPDYLPRTMDFGLNVRGFLDRYCPPNCPPSFFPITVRCCDLDPEKRPSFVKLEQWLETLRMHLAGHLPLGPQLEQLERGFWETYRRGESSLPAHPEVPD.

LIM zinc-binding domains follow at residues 25 to 75 (CASC…CKKD) and 84 to 137 (CHGC…CGQC). The 94-residue stretch at 165–258 (LVSIPASAHG…LLQLTLEHDP (94 aa)) folds into the PDZ domain. At Ser210 the chain carries Phosphoserine. A Phosphothreonine modification is found at Thr229. Residues 256–316 (HDPHDSLGHG…SLVSPASQRK (61 aa)) are disordered. The segment covering 278-289 (HTPSGQAGSSAR) has biased composition (polar residues). Phosphoserine is present on residues Ser298, Ser302, Ser307, and Ser310. Ser323 is modified (phosphoserine; by MAPKAPK2). Ser337 carries the post-translational modification Phosphoserine. In terms of domain architecture, Protein kinase spans 339–604 (LIHGEVLGKG…PSFVKLEQWL (266 aa)). ATP contacts are provided by residues 345–353 (LGKGCFGQA) and Lys368. Asp460 is a catalytic residue. Thr508 bears the Phosphothreonine; by ROCK1 and PAK1 mark.

The protein belongs to the protein kinase superfamily. TKL Ser/Thr protein kinase family. As to quaternary structure, interacts (via LIM domain) with the cytoplasmic domain of NRG1. Interacts with NISCH. Interacts with RLIM and RNF6. Self-associates to form homodimers. Interacts with HSP90AA1; this interaction promotes LIMK1 dimerization and subsequent transphosphorylation. Interacts with CDKN1C. Interacts with SSH1. Interacts with ROCK1. Interacts (via LIM zinc-binding domains) with FAM89B/LRAP25 (via LRR repeat). Forms a tripartite complex with CDC42BPA, CDC42BPB and FAM89B/LRAP25. Post-translationally, autophosphorylated. Phosphorylated on Thr-508 by ROCK1 and PAK1, resulting in activation. Phosphorylated by PAK4 which increases the ability of LIMK1 to phosphorylate cofilin. Phosphorylated at Ser-323 by MAPKAPK2 during activation of VEGFA-induced signaling, which results in activation of LIMK1 and promotion of actin reorganization, cell migration, and tubule formation of endothelial cells. Dephosphorylated and inactivated by SSH1. Phosphorylated by CDC42BP. In terms of processing, ubiquitinated. 'Lys-48'-linked polyubiquitination by RNF6 leads to proteasomal degradation through the 26S proteasome, modulating LIMK1 levels in the growth cone and its effect on axonal outgrowth. Also polyubiquitinated by RLIM.

It localises to the cytoplasm. The protein resides in the nucleus. Its subcellular location is the cytoskeleton. The protein localises to the cell projection. It is found in the lamellipodium. It carries out the reaction L-seryl-[protein] + ATP = O-phospho-L-seryl-[protein] + ADP + H(+). The enzyme catalyses L-threonyl-[protein] + ATP = O-phospho-L-threonyl-[protein] + ADP + H(+). Functionally, serine/threonine-protein kinase that plays an essential role in the regulation of actin filament dynamics. Acts downstream of several Rho family GTPase signal transduction pathways. Activated by upstream kinases including ROCK1, PAK1 and PAK4, which phosphorylate LIMK1 on a threonine residue located in its activation loop. LIMK1 subsequently phosphorylates and inactivates the actin binding/depolymerizing factors cofilin-1/CFL1, cofilin-2/CFL2 and destrin/DSTN, thereby preventing the cleavage of filamentous actin (F-actin), and stabilizing the actin cytoskeleton. In this way LIMK1 regulates several actin-dependent biological processes including cell motility, cell cycle progression, and differentiation. Phosphorylates TPPP on serine residues, thereby promoting microtubule disassembly. Stimulates axonal outgrowth and may be involved in brain development. The chain is LIM domain kinase 1 (Limk1) from Rattus norvegicus (Rat).